The primary structure comprises 702 residues: Polyribonucleotide nucleotidyltransferase 3 (702 aa).

Residues Asp483 and Asp489 each contribute to the Mg(2+) site. Residues 550–609 (PKVTQIKVHPDKVREVIGAGGKVINKIIDETGCKITIENDGTIYVAAPDQESSRRAVEMI) form the KH domain. The 69-residue stretch at 619 to 687 (GEVYTGKVIK…PQGKIGLSRK (69 aa)) folds into the S1 motif domain.

It belongs to the polyribonucleotide nucleotidyltransferase family. Requires Mg(2+) as cofactor.

The protein localises to the cytoplasm. It carries out the reaction RNA(n+1) + phosphate = RNA(n) + a ribonucleoside 5'-diphosphate. Involved in mRNA degradation. Catalyzes the phosphorolysis of single-stranded polyribonucleotides processively in the 3'- to 5'-direction. The sequence is that of Polyribonucleotide nucleotidyltransferase 3 from Alkaliphilus metalliredigens (strain QYMF).